The chain runs to 173 residues: Crossover junction endodeoxyribonuclease RuvC (173 aa).

Catalysis depends on residues Asp-10, Glu-71, and Asp-143. Mg(2+) is bound by residues Asp-10, Glu-71, and Asp-143.

It belongs to the RuvC family. Homodimer which binds Holliday junction (HJ) DNA. The HJ becomes 2-fold symmetrical on binding to RuvC with unstacked arms; it has a different conformation from HJ DNA in complex with RuvA. In the full resolvosome a probable DNA-RuvA(4)-RuvB(12)-RuvC(2) complex forms which resolves the HJ. The cofactor is Mg(2+).

It localises to the cytoplasm. The enzyme catalyses Endonucleolytic cleavage at a junction such as a reciprocal single-stranded crossover between two homologous DNA duplexes (Holliday junction).. Functionally, the RuvA-RuvB-RuvC complex processes Holliday junction (HJ) DNA during genetic recombination and DNA repair. Endonuclease that resolves HJ intermediates. Cleaves cruciform DNA by making single-stranded nicks across the HJ at symmetrical positions within the homologous arms, yielding a 5'-phosphate and a 3'-hydroxyl group; requires a central core of homology in the junction. The consensus cleavage sequence is 5'-(A/T)TT(C/G)-3'. Cleavage occurs on the 3'-side of the TT dinucleotide at the point of strand exchange. HJ branch migration catalyzed by RuvA-RuvB allows RuvC to scan DNA until it finds its consensus sequence, where it cleaves and resolves the cruciform DNA. The protein is Crossover junction endodeoxyribonuclease RuvC of Gloeobacter violaceus (strain ATCC 29082 / PCC 7421).